We begin with the raw amino-acid sequence, 183 residues long: Peptide deformylase-like (183 aa).

Glu-140 is a catalytic residue.

It belongs to the polypeptide deformylase family.

In Rickettsia conorii (strain ATCC VR-613 / Malish 7), this protein is Peptide deformylase-like.